A 420-amino-acid chain; its full sequence is Succinate--CoA ligase [GDP-forming] subunit beta, mitochondrial (420 aa).

The 229-residue stretch at lysine 35–phenylalanine 263 folds into the ATP-grasp domain. Residues glutamine 46, glycine 78–glycine 80, and valine 135 each bind GTP. Residues asparagine 232 and aspartate 246 each coordinate Mg(2+). Substrate-binding positions include asparagine 297 and glycine 354–methionine 356.

The protein belongs to the succinate/malate CoA ligase beta subunit family. GTP-specific subunit beta subfamily. Heterodimer of an alpha and a beta subunit. The beta subunit determines specificity for GTP. Mg(2+) serves as cofactor.

Its subcellular location is the mitochondrion. The enzyme catalyses GTP + succinate + CoA = succinyl-CoA + GDP + phosphate. The protein operates within carbohydrate metabolism; tricarboxylic acid cycle; succinate from succinyl-CoA (ligase route): step 1/1. Its function is as follows. GTP-specific succinyl-CoA synthetase functions in the citric acid cycle (TCA), coupling the hydrolysis of succinyl-CoA to the synthesis of GTP and thus represents the only step of substrate-level phosphorylation in the TCA. The beta subunit provides nucleotide specificity of the enzyme and binds the substrate succinate, while the binding sites for coenzyme A and phosphate are found in the alpha subunit. This is Succinate--CoA ligase [GDP-forming] subunit beta, mitochondrial (scsB) from Dictyostelium discoideum (Social amoeba).